Reading from the N-terminus, the 109-residue chain is MFTKGGLGNLMKQAQQMQEKMAKVQEEIAKMEVTGEAGAGLVKVTINGAHNCRRVEVDPSLLKDDKDMLEDLAAAAFNDATRRISEVQKKKMSAISTGMQLPTGFNIPI.

This sequence belongs to the YbaB/EbfC family. Homodimer.

It localises to the cytoplasm. Its subcellular location is the nucleoid. Its function is as follows. Binds to DNA and alters its conformation. May be involved in regulation of gene expression, nucleoid organization and DNA protection. The polypeptide is Nucleoid-associated protein BUsg_467 (Buchnera aphidicola subsp. Schizaphis graminum (strain Sg)).